We begin with the raw amino-acid sequence, 198 residues long: Holliday junction branch migration complex subunit RuvA (198 aa).

The tract at residues 1–63 (MYDYIKGQLT…EDAHLLFGFH (63 aa)) is domain I. The domain II stretch occupies residues 64-142 (TEDEKDVFLK…EAPQETGHTK (79 aa)). The flexible linker stretch occupies residues 143–147 (ARSNK). Residues 148 to 198 (AGNTQLDEAIEALLALGYTATELKKIRAFFEGTSETAEQYIKSALKLLMKG) form a domain III region.

The protein belongs to the RuvA family. In terms of assembly, homotetramer. Forms an RuvA(8)-RuvB(12)-Holliday junction (HJ) complex. HJ DNA is sandwiched between 2 RuvA tetramers; dsDNA enters through RuvA and exits via RuvB. An RuvB hexamer assembles on each DNA strand where it exits the tetramer. Each RuvB hexamer is contacted by two RuvA subunits (via domain III) on 2 adjacent RuvB subunits; this complex drives branch migration. In the full resolvosome a probable DNA-RuvA(4)-RuvB(12)-RuvC(2) complex forms which resolves the HJ.

The protein localises to the cytoplasm. In terms of biological role, the RuvA-RuvB-RuvC complex processes Holliday junction (HJ) DNA during genetic recombination and DNA repair, while the RuvA-RuvB complex plays an important role in the rescue of blocked DNA replication forks via replication fork reversal (RFR). RuvA specifically binds to HJ cruciform DNA, conferring on it an open structure. The RuvB hexamer acts as an ATP-dependent pump, pulling dsDNA into and through the RuvAB complex. HJ branch migration allows RuvC to scan DNA until it finds its consensus sequence, where it cleaves and resolves the cruciform DNA. The protein is Holliday junction branch migration complex subunit RuvA of Streptococcus pyogenes serotype M49 (strain NZ131).